A 476-amino-acid polypeptide reads, in one-letter code: MAVPFVEDWDLVQTLGEGAYGEVQLAVNRITEEAVAVKIVDMKRAIDCPENIKKEICINKMLSHENVVKFYGHRREGHIQYLFLEYCSGGELFDRIEPDIGMPEQDAQRFFHQLMAGVVYLHGIGITHRDIKPENLLLDERDNLKISDFGLATVFRHNNRERLLNKMCGTLPYVAPELLKRKEFHAEPVDVWSCGIVLTAMLAGELPWDQPSDSCQEYSDWKEKKTYLNPWKKIDSAPLALLHKILVETPSARITIPDIKKDRWYNKPLNRGAKRPRATSGGMSESSSGFSKHIHSNLDFSPVNNGSSEETVKFSSSQPEPRTGLSLWDTGPSNVDKLVQGISFSQPTCPEHMLVNSQLLGTPGSSQNPWQRLVKRMTRFFTKLDADKSYQCLKETFEKLGYQWKKSCMNQVTVSTTDRRNNKLIFKINLVEMDEKILVDFRLSKGDGLEFKRHFLKIKGKLSDVVSSQKVWFPVT.

Positions 1 to 265 are interaction with CLSPN; it reads MAVPFVEDWD…IPDIKKDRWY (265 aa). Residues 9-265 enclose the Protein kinase domain; sequence WDLVQTLGEG…IPDIKKDRWY (257 aa). ATP contacts are provided by residues 15 to 23 and K38; that span reads LGEGAYGEV. The active-site Proton acceptor is the D130. K132 participates in a covalent cross-link: Glycyl lysine isopeptide (Lys-Gly) (interchain with G-Cter in ubiquitin). A disordered region spans residues 267 to 331; that stretch reads KPLNRGAKRP…RTGLSLWDTG (65 aa). The residue at position 280 (S280) is a Phosphoserine; by PKB/AKT1. Positions 280-291 are enriched in low complexity; that stretch reads SGGMSESSSGFS. A phosphoserine mark is found at S286, S296, and S301. Residues 298 to 320 are compositionally biased toward polar residues; sequence LDFSPVNNGSSEETVKFSSSQPE. S317 bears the Phosphoserine; by ATM and ATR mark. S345 carries the post-translational modification Phosphoserine; by ATR. The autoinhibitory region stretch occupies residues 391–476; sequence QCLKETFEKL…SSQKVWFPVT (86 aa). A Glycyl lysine isopeptide (Lys-Gly) (interchain with G-Cter in ubiquitin) cross-link involves residue K436. 3 positions are modified to phosphoserine: S463, S467, and S468.

The protein belongs to the protein kinase superfamily. CAMK Ser/Thr protein kinase family. NIM1 subfamily. As to quaternary structure, interacts (phosphorylated by ATR) with RAD51. Interacts with and phosphorylates CLSPN, an adapter protein that regulates the ATR-dependent phosphorylation of CHEK1. Interacts with BRCA1. Interacts with and phosphorylates CDC25A, CDC25B and CDC25C. Interacts with FBXO6, which regulates CHEK1. Interacts with PPM1D, which regulates CHEK1 through dephosphorylation. Interacts with TIMELESS; DNA damage-dependent. Interacts with FEM1B; activates CHEK1 in response to stress. Interacts with TLK1. Interacts with XPO1 and YWHAZ. Interacts with CDK5RAP3; antagonizes CHEK1. Post-translationally, phosphorylated by ATR in a RAD17-dependent manner in response to ultraviolet irradiation and inhibition of DNA replication. Phosphorylated by ATM in response to ionizing irradiation. ATM and ATR can both phosphorylate Ser-317 and Ser-345 and this results in enhanced kinase activity. Phosphorylation at Ser-345 induces a change in the conformation of the protein, activates the kinase activity and is a prerequisite for interaction with FBXO6 and subsequent ubiquitination at Lys-436. Phosphorylation at Ser-345 also increases binding to 14-3-3 proteins and promotes nuclear retention. Conversely, dephosphorylation at Ser-345 by PPM1D may contribute to exit from checkpoint mediated cell cycle arrest. Phosphorylation at Ser-280 by AKT1/PKB, may promote mono and/or diubiquitination. Also phosphorylated at undefined residues during mitotic arrest, resulting in decreased activity. In terms of processing, ubiquitinated. Mono or diubiquitination promotes nuclear exclusion. The activated form (phosphorylated on Ser-345) is polyubiquitinated at Lys-436 by some SCF-type E3 ubiquitin ligase complex containing FBXO6 promoting its degradation. Ubiquitination and degradation are required to terminate the checkpoint and ensure that activated CHEK1 does not accumulate as cells progress through S phase, when replication forks encounter transient impediments during normal DNA replication. 'Lys-63'-mediated ubiquitination by TRAF4 at Lys-132 activates cell cycle arrest and activation of DNA repair. Proteolytically cleaved at the C-terminus by SPRTN during normal DNA replication, thereby promoting CHEK1 removal from chromatin and activating the protein kinase activity. As to expression, found in all adult tissues tested. Elevated expression in testis, lung and spleen. 15.5 day old embryos show ubiquitous expression with strong expression in brain, liver, kidney, pancreas, intestine, thymus and lung.

The protein localises to the nucleus. It localises to the chromosome. It is found in the cytoplasm. The protein resides in the cytoskeleton. Its subcellular location is the microtubule organizing center. The protein localises to the centrosome. The enzyme catalyses L-seryl-[protein] + ATP = O-phospho-L-seryl-[protein] + ADP + H(+). The catalysed reaction is L-threonyl-[protein] + ATP = O-phospho-L-threonyl-[protein] + ADP + H(+). Activated through phosphorylation predominantly by ATR but also by ATM in response to DNA damage or inhibition of DNA replication. Activation is modulated by several mediators including CLSPN, BRCA1 and FEM1B. Proteolytic cleavage at the C-terminus by SPRTN during normal DNA replication activates the protein kinase activity. In terms of biological role, serine/threonine-protein kinase which is required for checkpoint-mediated cell cycle arrest and activation of DNA repair in response to the presence of DNA damage or unreplicated DNA. May also negatively regulate cell cycle progression during unperturbed cell cycles. This regulation is achieved by a number of mechanisms that together help to preserve the integrity of the genome. Recognizes the substrate consensus sequence [R-X-X-S/T]. Binds to and phosphorylates CDC25A, CDC25B and CDC25C. Phosphorylation of CDC25A at 'Ser-178' and 'Thr-507' and phosphorylation of CDC25C at 'Ser-216' creates binding sites for 14-3-3 proteins which inhibit CDC25A and CDC25C. Phosphorylation of CDC25A at 'Ser-76', 'Ser-124', 'Ser-178', 'Ser-279' and 'Ser-293' promotes proteolysis of CDC25A. Phosphorylation of CDC25A at 'Ser-76' primes the protein for subsequent phosphorylation at 'Ser-79', 'Ser-82' and 'Ser-88' by NEK11, which is required for polyubiquitination and degradation of CDCD25A. Inhibition of CDC25 leads to increased inhibitory tyrosine phosphorylation of CDK-cyclin complexes and blocks cell cycle progression. Also phosphorylates NEK6. Binds to and phosphorylates RAD51 at 'Thr-309', which promotes the release of RAD51 from BRCA2 and enhances the association of RAD51 with chromatin, thereby promoting DNA repair by homologous recombination. Phosphorylates multiple sites within the C-terminus of TP53, which promotes activation of TP53 by acetylation and promotes cell cycle arrest and suppression of cellular proliferation. Also promotes repair of DNA cross-links through phosphorylation of FANCE. Binds to and phosphorylates TLK1 at 'Ser-743', which prevents the TLK1-dependent phosphorylation of the chromatin assembly factor ASF1A. This may enhance chromatin assembly both in the presence or absence of DNA damage. May also play a role in replication fork maintenance through regulation of PCNA. May regulate the transcription of genes that regulate cell-cycle progression through the phosphorylation of histones. Phosphorylates histone H3.1 (to form H3T11ph), which leads to epigenetic inhibition of a subset of genes. May also phosphorylate RB1 to promote its interaction with the E2F family of transcription factors and subsequent cell cycle arrest. Phosphorylates SPRTN, promoting SPRTN recruitment to chromatin. Reduces replication stress and activates the G2/M checkpoint, by phosphorylating and inactivating PABIR1/FAM122A and promoting the serine/threonine-protein phosphatase 2A-mediated dephosphorylation and stabilization of WEE1 levels and activity. The polypeptide is Serine/threonine-protein kinase Chk1 (Chek1) (Mus musculus (Mouse)).